The sequence spans 507 residues: ATP synthase subunit alpha (507 aa).

Position 170–177 (170–177 (GDRKTGKT)) interacts with ATP.

The protein belongs to the ATPase alpha/beta chains family. In terms of assembly, F-type ATPases have 2 components, CF(1) - the catalytic core - and CF(0) - the membrane proton channel. CF(1) has five subunits: alpha(3), beta(3), gamma(1), delta(1), epsilon(1). CF(0) has three main subunits: a(1), b(2) and c(9-12). The alpha and beta chains form an alternating ring which encloses part of the gamma chain. CF(1) is attached to CF(0) by a central stalk formed by the gamma and epsilon chains, while a peripheral stalk is formed by the delta and b chains.

The protein resides in the cell inner membrane. It carries out the reaction ATP + H2O + 4 H(+)(in) = ADP + phosphate + 5 H(+)(out). Its function is as follows. Produces ATP from ADP in the presence of a proton gradient across the membrane. The alpha chain is a regulatory subunit. The polypeptide is ATP synthase subunit alpha (Anaplasma marginale (strain Florida)).